Here is a 158-residue protein sequence, read N- to C-terminus: Transcription elongation factor GreA (158 aa).

This sequence belongs to the GreA/GreB family.

Its function is as follows. Necessary for efficient RNA polymerase transcription elongation past template-encoded arresting sites. The arresting sites in DNA have the property of trapping a certain fraction of elongating RNA polymerases that pass through, resulting in locked ternary complexes. Cleavage of the nascent transcript by cleavage factors such as GreA or GreB allows the resumption of elongation from the new 3'terminus. GreA releases sequences of 2 to 3 nucleotides. The protein is Transcription elongation factor GreA of Pseudomonas syringae pv. tomato (strain ATCC BAA-871 / DC3000).